A 333-amino-acid chain; its full sequence is Ketol-acid reductoisomerase (NADP(+)) (333 aa).

The KARI N-terminal Rossmann domain occupies 2-182 (AKLYYEKDCN…GGARAGVLKT (181 aa)). Residues 25–28 (YGSQ), Ser-51, Ser-53, and 83–86 (DEKQ) contribute to the NADP(+) site. His-108 is an active-site residue. Gly-134 is a binding site for NADP(+). The KARI C-terminal knotted domain maps to 183–328 (TFKEETETDL…KELRDMMSWS (146 aa)). Mg(2+) is bound by residues Asp-191, Glu-195, Glu-227, and Glu-231. Ser-252 contacts substrate.

Belongs to the ketol-acid reductoisomerase family. Requires Mg(2+) as cofactor.

It carries out the reaction (2R)-2,3-dihydroxy-3-methylbutanoate + NADP(+) = (2S)-2-acetolactate + NADPH + H(+). The catalysed reaction is (2R,3R)-2,3-dihydroxy-3-methylpentanoate + NADP(+) = (S)-2-ethyl-2-hydroxy-3-oxobutanoate + NADPH + H(+). Its pathway is amino-acid biosynthesis; L-isoleucine biosynthesis; L-isoleucine from 2-oxobutanoate: step 2/4. It participates in amino-acid biosynthesis; L-valine biosynthesis; L-valine from pyruvate: step 2/4. Its function is as follows. Involved in the biosynthesis of branched-chain amino acids (BCAA). Catalyzes an alkyl-migration followed by a ketol-acid reduction of (S)-2-acetolactate (S2AL) to yield (R)-2,3-dihydroxy-isovalerate. In the isomerase reaction, S2AL is rearranged via a Mg-dependent methyl migration to produce 3-hydroxy-3-methyl-2-ketobutyrate (HMKB). In the reductase reaction, this 2-ketoacid undergoes a metal-dependent reduction by NADPH to yield (R)-2,3-dihydroxy-isovalerate. The polypeptide is Ketol-acid reductoisomerase (NADP(+)) (Alkaliphilus metalliredigens (strain QYMF)).